The chain runs to 738 residues: DNA topoisomerase 4 subunit A (738 aa).

Residues Leu-32–Gln-496 enclose the Topo IIA-type catalytic domain. Residue Tyr-120 is the O-(5'-phospho-DNA)-tyrosine intermediate of the active site.

It belongs to the type II topoisomerase GyrA/ParC subunit family. ParC type 1 subfamily. Heterotetramer composed of ParC and ParE.

Its subcellular location is the cell membrane. The enzyme catalyses ATP-dependent breakage, passage and rejoining of double-stranded DNA.. Functionally, topoisomerase IV is essential for chromosome segregation. It relaxes supercoiled DNA. Performs the decatenation events required during the replication of a circular DNA molecule. This is DNA topoisomerase 4 subunit A from Rickettsia conorii (strain ATCC VR-613 / Malish 7).